The primary structure comprises 670 residues: Catalase (670 aa).

Catalysis depends on residues His61 and Asn132. Tyr345 is a heme binding site.

Belongs to the catalase family. In terms of assembly, homotetramer. Heme serves as cofactor.

The protein resides in the peroxisome matrix. The enzyme catalyses 2 H2O2 = O2 + 2 H2O. Its function is as follows. Catalyzes the degradation of hydrogen peroxide (H(2)O(2)) generated by peroxisomal oxidases to water and oxygen, thereby protecting cells from the toxic effects of hydrogen peroxide. This Penicillium janthinellum (Penicillium vitale) protein is Catalase.